A 377-amino-acid chain; its full sequence is 1-deoxy-D-xylulose 5-phosphate reductoisomerase (377 aa).

Residues Thr20, Gly21, Ile23, Asn46, and Asn115 each coordinate NADPH. Residue Lys116 coordinates 1-deoxy-D-xylulose 5-phosphate. Residue Glu117 participates in NADPH binding. Residue Asp141 participates in Mn(2+) binding. Residues Ser142, Glu143, Ser166, and His189 each coordinate 1-deoxy-D-xylulose 5-phosphate. Glu143 provides a ligand contact to Mn(2+). An NADPH-binding site is contributed by Gly195. 1-deoxy-D-xylulose 5-phosphate is bound by residues Ser202, Asn207, Lys208, and Glu211. Glu211 provides a ligand contact to Mn(2+).

Belongs to the DXR family. Mg(2+) is required as a cofactor. Mn(2+) serves as cofactor.

It carries out the reaction 2-C-methyl-D-erythritol 4-phosphate + NADP(+) = 1-deoxy-D-xylulose 5-phosphate + NADPH + H(+). Its pathway is isoprenoid biosynthesis; isopentenyl diphosphate biosynthesis via DXP pathway; isopentenyl diphosphate from 1-deoxy-D-xylulose 5-phosphate: step 1/6. Its function is as follows. Catalyzes the NADPH-dependent rearrangement and reduction of 1-deoxy-D-xylulose-5-phosphate (DXP) to 2-C-methyl-D-erythritol 4-phosphate (MEP). This is 1-deoxy-D-xylulose 5-phosphate reductoisomerase from Malacoplasma penetrans (strain HF-2) (Mycoplasma penetrans).